The primary structure comprises 360 residues: Probable dual-specificity RNA methyltransferase RlmN (360 aa).

The Proton acceptor role is filled by E103. One can recognise a Radical SAM core domain in the interval 109–342 (HEYGNSVCVT…VTIRREQGHD (234 aa)). Residues C116 and C347 are joined by a disulfide bond. [4Fe-4S] cluster contacts are provided by C123, C127, and C130. S-adenosyl-L-methionine contacts are provided by residues 173-174 (GE), S205, 228-230 (SLH), and N304. Residue C347 is the S-methylcysteine intermediate of the active site.

This sequence belongs to the radical SAM superfamily. RlmN family. It depends on [4Fe-4S] cluster as a cofactor.

It localises to the cytoplasm. It catalyses the reaction adenosine(2503) in 23S rRNA + 2 reduced [2Fe-2S]-[ferredoxin] + 2 S-adenosyl-L-methionine = 2-methyladenosine(2503) in 23S rRNA + 5'-deoxyadenosine + L-methionine + 2 oxidized [2Fe-2S]-[ferredoxin] + S-adenosyl-L-homocysteine. It carries out the reaction adenosine(37) in tRNA + 2 reduced [2Fe-2S]-[ferredoxin] + 2 S-adenosyl-L-methionine = 2-methyladenosine(37) in tRNA + 5'-deoxyadenosine + L-methionine + 2 oxidized [2Fe-2S]-[ferredoxin] + S-adenosyl-L-homocysteine. In terms of biological role, specifically methylates position 2 of adenine 2503 in 23S rRNA and position 2 of adenine 37 in tRNAs. The polypeptide is Probable dual-specificity RNA methyltransferase RlmN (Bacillus pumilus (strain SAFR-032)).